Reading from the N-terminus, the 247-residue chain is 3-deoxy-manno-octulosonate cytidylyltransferase (247 aa).

This sequence belongs to the KdsB family.

Its subcellular location is the cytoplasm. The enzyme catalyses 3-deoxy-alpha-D-manno-oct-2-ulosonate + CTP = CMP-3-deoxy-beta-D-manno-octulosonate + diphosphate. The protein operates within nucleotide-sugar biosynthesis; CMP-3-deoxy-D-manno-octulosonate biosynthesis; CMP-3-deoxy-D-manno-octulosonate from 3-deoxy-D-manno-octulosonate and CTP: step 1/1. It participates in bacterial outer membrane biogenesis; lipopolysaccharide biosynthesis. Functionally, activates KDO (a required 8-carbon sugar) for incorporation into bacterial lipopolysaccharide in Gram-negative bacteria. This chain is 3-deoxy-manno-octulosonate cytidylyltransferase, found in Methylobacterium radiotolerans (strain ATCC 27329 / DSM 1819 / JCM 2831 / NBRC 15690 / NCIMB 10815 / 0-1).